Here is a 262-residue protein sequence, read N- to C-terminus: Proteasome subunit alpha (262 aa).

Positions 235–262 (LLPTTGESDAGDSGADGSPSGDSPDTSA) are disordered.

This sequence belongs to the peptidase T1A family. The 20S proteasome core is composed of 14 alpha and 14 beta subunits that assemble into four stacked heptameric rings, resulting in a barrel-shaped structure. The two inner rings, each composed of seven catalytic beta subunits, are sandwiched by two outer rings, each composed of seven alpha subunits. The catalytic chamber with the active sites is on the inside of the barrel. Has a gated structure, the ends of the cylinder being occluded by the N-termini of the alpha-subunits. Is capped by the proteasome-associated ATPase, ARC.

It localises to the cytoplasm. The protein operates within protein degradation; proteasomal Pup-dependent pathway. The formation of the proteasomal ATPase ARC-20S proteasome complex, likely via the docking of the C-termini of ARC into the intersubunit pockets in the alpha-rings, may trigger opening of the gate for substrate entry. Interconversion between the open-gate and close-gate conformations leads to a dynamic regulation of the 20S proteasome proteolysis activity. Functionally, component of the proteasome core, a large protease complex with broad specificity involved in protein degradation. This Gordonia bronchialis (strain ATCC 25592 / DSM 43247 / BCRC 13721 / JCM 3198 / KCTC 3076 / NBRC 16047 / NCTC 10667) (Rhodococcus bronchialis) protein is Proteasome subunit alpha.